The chain runs to 791 residues: MVEYVVSLDKLGVHDVEHVGGKNASLGEMISNLAGAGVSVPGGFATTAQAYRDFLEQSGLNDRIHAALDALDVDDVNALAKTGAQIRQWVMEAEFPARLDSEIRQAFAALANGNDNLAVAVRSSATAEDLPDASFAGQQETFLNIRGVDNVIRAAKEVFASLFNDRAIAYRVHQGFDHKLVALSAGVQRMVRSETGTAGVMFTLDTESGFRDVVFITGAYGLGETVVQGAVNPDEFYVHKPTLEAGRPAILRRNLGSKAIKMIYGDEAKAGRSVKVVDVDRADRARFALSDAEVTELAKQAMIIEKHYGRPMDIEWAKDGDDGKLYIVQARPETVKSRASATVMERYLLKEKGTVLVEGRAIGQRIGAGPVKVINDVSEMDKVQPGDVLVSDMTDPDWEPVMKRASAIVTNRGGRTCHAAIIARELGIPAVVGCGNATQILQDGQGVTVSCAEGDTGFIFEGELGFDVRKNSVDAMPDLPFKIMMNVGNPDRAFDFAQLPNEGVGLARLEFIINRMIGVHPKALLNFAGLPADIKESVEKRIAGYPDPVGFYVEKLVEGISTLAAAFWPKKVIVRLSDFKSNEYANLIGGKLYEPEEENPMLGFRGASRYISESFRDCFELECRALKKVRNEMGLTNVEIMVPFVRTLGEASQVVELLAGNGLKRGENGLKVIMMCELPSNALLADEFLEFFDGFSIGSNDLTQLTLGLDRDSGIVAHLFDERNPAVKKLLANAIAACNKAGKYIGICGQGPSDHPDLARWLMEQGIESVSLNPDSVLDTWFFLAEGQDQA.

Thr-416 is subject to Phosphothreonine. His-418 (tele-phosphohistidine intermediate) is an active-site residue. The substrate site is built by Arg-508, Arg-575, Glu-677, Gly-698, Ser-699, Asn-700, and Asp-701. Glu-677 contacts Mg(2+). Asp-701 contributes to the Mg(2+) binding site. Tyr-744 carries the post-translational modification Phosphotyrosine. Cys-748 serves as the catalytic Proton donor.

Belongs to the PEP-utilizing enzyme family. It depends on Mg(2+) as a cofactor.

It catalyses the reaction pyruvate + ATP + H2O = phosphoenolpyruvate + AMP + phosphate + 2 H(+). It participates in carbohydrate biosynthesis; gluconeogenesis. Catalyzes the phosphorylation of pyruvate to phosphoenolpyruvate. This chain is Phosphoenolpyruvate synthase (ppsA), found in Pseudomonas aeruginosa (strain UCBPP-PA14).